A 115-amino-acid polypeptide reads, in one-letter code: NADH-ubiquinone oxidoreductase chain 3 (115 aa).

A run of 3 helical transmembrane segments spans residues 3–23, 55–75, and 84–104; these read FVLA…ITFW, FFLV…LLPL, and LPLM…GLTY.

The protein belongs to the complex I subunit 3 family. Core subunit of respiratory chain NADH dehydrogenase (Complex I) which is composed of 45 different subunits. Interacts with TMEM186. Interacts with TMEM242.

The protein localises to the mitochondrion inner membrane. The catalysed reaction is a ubiquinone + NADH + 5 H(+)(in) = a ubiquinol + NAD(+) + 4 H(+)(out). Core subunit of the mitochondrial membrane respiratory chain NADH dehydrogenase (Complex I) which catalyzes electron transfer from NADH through the respiratory chain, using ubiquinone as an electron acceptor. Essential for the catalytic activity of complex I. In Pongo abelii (Sumatran orangutan), this protein is NADH-ubiquinone oxidoreductase chain 3.